The sequence spans 614 residues: Probable NOT transcription complex subunit VIP2 (614 aa).

Disordered stretches follow at residues 1–46, 58–89, and 361–391; these read MSNL…NLQG, NMQG…SSGR, and NLGA…GLRP. A compositionally biased stretch (polar residues) spans 364 to 381; it reads ATYSSHRPQQQPQHTSST.

The protein belongs to the CNOT2/3/5 family. In terms of assembly, interacts with Agrobacterium tumefaciens VirE2. Binds to VIP1. Forms a complex made of Agrobacterium VirE2, VIP1, VIP2 and single-stranded DNA (ssDNA).

It is found in the nucleus. In terms of biological role, transcriptional regulator required for Agrobacterium-mediated stable genetic transformation by T-DNA integration in host genome, but not for T-DNA transient expression. The sequence is that of Probable NOT transcription complex subunit VIP2 (VIP2) from Arabidopsis thaliana (Mouse-ear cress).